A 283-amino-acid chain; its full sequence is MVLMIVSGRSGSGKSVALRALEDMGFYCVDNLPVVLLPELANTLADRDISAAVSIDVRNMPESPEVFEEALTKLPASFSPQLLFLDAERNTLIRRYSDTRRLHPLSSKNLSLESAIDQESDLLEPLRSRADLIIDTSEMSVHELAEMLRTRLLGKRERELTMVFESFGFKHGIPIDADYVFDVRFLPNPHWDPKLRPMTGLDRPVAAFLDRHTEVHNFIYQTRSYLELWLPMLETNNRSYLTVAIGCTGGKHRSVYVAEQLADYFRSRGKNVQSRHRTLEKRK.

Position 8–15 (8–15 (GRSGSGKS)) interacts with ATP. 56–59 (DVRN) is a binding site for GTP. The interval 266–283 (RSRGKNVQSRHRTLEKRK) is RNA-binding.

This sequence belongs to the RapZ-like family. RapZ subfamily. In terms of assembly, homotrimer.

Its function is as follows. Modulates the synthesis of GlmS, by affecting the processing and stability of the regulatory small RNA GlmZ. When glucosamine-6-phosphate (GlcN6P) concentrations are high in the cell, RapZ binds GlmZ and targets it to cleavage by RNase E. Consequently, GlmZ is inactivated and unable to activate GlmS synthesis. Under low GlcN6P concentrations, RapZ is sequestered and inactivated by an other regulatory small RNA, GlmY, preventing GlmZ degradation and leading to synthesis of GlmS. This Photorhabdus laumondii subsp. laumondii (strain DSM 15139 / CIP 105565 / TT01) (Photorhabdus luminescens subsp. laumondii) protein is RNase adapter protein RapZ.